Here is a 124-residue protein sequence, read N- to C-terminus: Fluoride-specific ion channel FluC 2 (124 aa).

4 consecutive transmembrane segments (helical) span residues 1–21 (MSDI…RFQI), 34–54 (FLIL…LSLV), 66–86 (LILF…SFVY), and 103–123 (LFII…FLGT). Residues glycine 76 and serine 79 each contribute to the Na(+) site.

It belongs to the fluoride channel Fluc/FEX (TC 1.A.43) family.

It is found in the cell inner membrane. The catalysed reaction is fluoride(in) = fluoride(out). Its activity is regulated as follows. Na(+) is not transported, but it plays an essential structural role and its presence is essential for fluoride channel function. In terms of biological role, fluoride-specific ion channel. Important for reducing fluoride concentration in the cell, thus reducing its toxicity. This Prochlorococcus marinus (strain NATL2A) protein is Fluoride-specific ion channel FluC 2.